The sequence spans 1099 residues: Protein transport protein Sec24A (1099 aa).

Disordered stretches follow at residues 1–36, 65–139, and 279–317; these read MSQP…GPVQ, KTLN…LPGA, and SQPT…AGLP. Composition is skewed to polar residues over residues 10–20, 68–90, 108–126, 279–292, and 303–317; these read GGSSTGLQAQN, NPVS…NYQG, SLHS…QNPA, SQPT…SRSV, and YQNT…AGLP. Zn(2+) is bound by residues cysteine 437, cysteine 440, cysteine 458, and cysteine 461. A zinc finger-like region spans residues 437–461; sequence CRSCRTYINPFVSFLDQRRWKCNLC. Residues 972–1044 form a Gelsolin-like repeat; it reads PQPPILQLSV…TPESARTIAF (73 aa).

The protein belongs to the SEC23/SEC24 family. SEC24 subfamily. In terms of assembly, COPII is composed of at least five proteins: the Sec23/24 complex, the Sec13/31 complex and Sar1. Interacts with TMED2. Interacts (as part of the Sec23/24 complex) with SEC22B; recruits SEC22B into COPII-coated vesicles for its transport from the endoplasmic reticulum to the Golgi. Interacts with STING1; promoting STING1 translocation to COPII vesicles in a STEEP1-dependent manner. Interacts with TMEM39A. Interacts with SACM1L; this interaction is reduced in the absence of TMEM39A. Interacts with kinase FAM20C; transport of FAM20C from the endoplasmic reticulum to the Golgi is likely to be mediated by COPII vesicles.

The protein resides in the cytoplasmic vesicle. It localises to the COPII-coated vesicle membrane. It is found in the endoplasmic reticulum membrane. Its subcellular location is the cytoplasm. The protein localises to the cytosol. Its function is as follows. Component of the coat protein complex II (COPII) which promotes the formation of transport vesicles from the endoplasmic reticulum (ER). The coat has two main functions, the physical deformation of the endoplasmic reticulum membrane into vesicles and the selection of cargo molecules for their transport to the Golgi complex. Plays a central role in cargo selection within the COPII complex and together with SEC24B may have a different specificity compared to SEC24C and SEC24D. May package preferentially cargos with cytoplasmic DxE or LxxLE motifs and may also recognize conformational epitopes. The polypeptide is Protein transport protein Sec24A (Bos taurus (Bovine)).